The sequence spans 464 residues: 3-isopropylmalate dehydratase large subunit (464 aa).

[4Fe-4S] cluster is bound by residues Cys-337, Cys-397, and Cys-400.

Belongs to the aconitase/IPM isomerase family. LeuC type 1 subfamily. In terms of assembly, heterodimer of LeuC and LeuD. [4Fe-4S] cluster is required as a cofactor.

The enzyme catalyses (2R,3S)-3-isopropylmalate = (2S)-2-isopropylmalate. Its pathway is amino-acid biosynthesis; L-leucine biosynthesis; L-leucine from 3-methyl-2-oxobutanoate: step 2/4. Functionally, catalyzes the isomerization between 2-isopropylmalate and 3-isopropylmalate, via the formation of 2-isopropylmaleate. In Bacillus cereus (strain ATCC 10987 / NRS 248), this protein is 3-isopropylmalate dehydratase large subunit.